Reading from the N-terminus, the 121-residue chain is Darcynin homolog (121 aa).

The protein belongs to the darcynin family.

The polypeptide is Darcynin homolog (Streptomyces avermitilis (strain ATCC 31267 / DSM 46492 / JCM 5070 / NBRC 14893 / NCIMB 12804 / NRRL 8165 / MA-4680)).